A 433-amino-acid polypeptide reads, in one-letter code: Adenosylhomocysteinase A (433 aa).

Residues Thr57, Asp132, Glu157, Lys187, and Asp191 each coordinate substrate. The tract at residues 184-351 (SVTKSKFDNL…EGRLVNLGCA (168 aa)) is NAD binding.

It belongs to the adenosylhomocysteinase family. Homotetramer. NAD(+) serves as cofactor.

It localises to the cytoplasm. It catalyses the reaction S-adenosyl-L-homocysteine + H2O = L-homocysteine + adenosine. Its pathway is amino-acid biosynthesis; L-homocysteine biosynthesis; L-homocysteine from S-adenosyl-L-homocysteine: step 1/1. Functionally, catalyzes the hydrolysis of S-adenosyl-L-homocysteine to form adenosine and homocysteine. Binds copper ions. The sequence is that of Adenosylhomocysteinase A (ahcy-a) from Xenopus laevis (African clawed frog).